We begin with the raw amino-acid sequence, 357 residues long: Acyl-coenzyme A diphosphatase NUDT19 (357 aa).

Residues 10-242 (AATVMLAAGW…IWLAPPQFYE (233 aa)) form the Nudix hydrolase domain. Residues 72-93 (PRFGLGPEPPRQPPFPGLSHGD) form a disordered region. A compositionally biased stretch (pro residues) spans 78 to 87 (PEPPRQPPFP). A Nudix box motif is present at residues 97 to 118 (AALPDDVALRICAIREAFEEAG). 2 residues coordinate Mg(2+): Glu112 and Glu116. Residue Lys300 is modified to N6-succinyllysine. Residues 355–357 (AHL) carry the Microbody targeting signal motif.

Belongs to the Nudix hydrolase family. Monomer. The cofactor is Mg(2+). Mn(2+) serves as cofactor. In terms of tissue distribution, highly expressed in the kidneys, with lower levels in skeletal muscle and brain (at protein level).

It localises to the peroxisome. The catalysed reaction is an acyl-CoA + H2O = an acyl-4'-phosphopantetheine + adenosine 3',5'-bisphosphate + 2 H(+). It carries out the reaction CoA + H2O = (R)-4'-phosphopantetheine + adenosine 3',5'-bisphosphate + 2 H(+). The enzyme catalyses hexanoyl-CoA + H2O = hexanoyl-4'-phosphopantetheine + adenosine 3',5'-bisphosphate + 2 H(+). It catalyses the reaction octanoyl-CoA + H2O = S-octanoyl-4'-phosphopantetheine + adenosine 3',5'-bisphosphate + 2 H(+). The catalysed reaction is butanoyl-CoA + H2O = S-butanoyl-4'-phosphopantetheine + adenosine 3',5'-bisphosphate + 2 H(+). It carries out the reaction propanoyl-CoA + H2O = propanoyl-4'-phosphopantetheine + adenosine 3',5'-bisphosphate + 2 H(+). The enzyme catalyses malonyl-CoA + H2O = malonyl-4'-phosphopantetheine + adenosine 3',5'-bisphosphate + 2 H(+). It catalyses the reaction succinyl-CoA + H2O = succinyl-4'-phosphopantetheine + adenosine 3',5'-bisphosphate + 2 H(+). The catalysed reaction is choloyl-CoA + H2O = S-choloyl-4'-phosphopantetheine + adenosine 3',5'-bisphosphate + 2 H(+). It carries out the reaction 4,8-dimethylnonanoyl-CoA + H2O = S-(4,8-dimethylnonanoyl)-4'-phosphopantetheine + adenosine 3',5'-bisphosphate + 2 H(+). The enzyme catalyses (9Z,12Z,15Z)-octadecatrienoyl-CoA + H2O = S-(9Z,12Z,15Z-octadecatrienoyl)-4'-phosphopantetheine + adenosine 3',5'-bisphosphate + 2 H(+). It catalyses the reaction (9Z,12Z)-octadecadienoyl-CoA + H2O = S-(9Z,12Z-octadecadienoyl)-4'-phosphopantetheine + adenosine 3',5'-bisphosphate + 2 H(+). The catalysed reaction is (9Z)-hexadecenoyl-CoA + H2O = S-(9Z-hexadecenoyl)-4'-phosphopantetheine + adenosine 3',5'-bisphosphate + 2 H(+). It carries out the reaction (9Z)-tetradecenoyl-CoA + H2O = S-(9Z-tetradecenoyl)-4'-phosphopantetheine + adenosine 3',5'-bisphosphate + 2 H(+). The enzyme catalyses (6Z)-octenoyl-CoA + H2O = S-(6Z-octenoyl)-4'-phosphopantetheine + adenosine 3',5'-bisphosphate + 2 H(+). It catalyses the reaction hexadecanoyl-CoA + H2O = S-hexadecanoyl-4'-phosphopantetheine + adenosine 3',5'-bisphosphate + 2 H(+). The catalysed reaction is tetradecanoyl-CoA + H2O = tetradecanoyl-4'-phosphopantetheine + adenosine 3',5'-bisphosphate + 2 H(+). It carries out the reaction dodecanoyl-CoA + H2O = S-dodecanoyl-4'-phosphopantetheine + adenosine 3',5'-bisphosphate + 2 H(+). The enzyme catalyses a 5'-end CoA-ribonucleoside in mRNA + H2O = a 5'-end phospho-adenosine-phospho-ribonucleoside in mRNA + (R)-4'-phosphopantetheine + 2 H(+). With respect to regulation, inhibited by chenodeoxycholic acid (CDCA) and its conjugated derivatives, taurochenodeoxycholic acid and glycochenodeoxycholic acid. Inhibited by fluoride. In terms of biological role, fatty acyl-coenzyme A (CoA) diphosphatase that hydrolyzes fatty acyl-CoA to yield acyl-4'-phosphopantetheine and adenosine 3',5'-bisphosphate. Mediates the hydrolysis of a wide range of CoA esters, including choloyl-CoA and branched-chain fatty-acyl-CoA esters and at low substrate concentrations medium and long-chain fatty-acyl-CoA esters are the primary substrates. Highest activity seen with medium-chain acyl-CoA esters and higher rates of activity seen with the unsaturated acyl-CoA esters compared with the saturated esters. Exhibits decapping activity towards dpCoA-capped RNAs in vitro. This Mus musculus (Mouse) protein is Acyl-coenzyme A diphosphatase NUDT19 (Nudt19).